Consider the following 59-residue polypeptide: Phycobilisome degradation protein NblA (59 aa).

This sequence to chloroplast ycf18.

In terms of biological role, involved in phycobilisome (PBS) degradation during nutrient deprivation. May mark the PBS for degradation by covalent association with PBS components or may disrupt the PBS via ionic interactions. The polypeptide is Phycobilisome degradation protein NblA (Synechococcus elongatus (strain ATCC 33912 / PCC 7942 / FACHB-805) (Anacystis nidulans R2)).